Here is a 160-residue protein sequence, read N- to C-terminus: Putative oxygenase ATEG_00330 (160 aa).

Residues 24 to 100 form the EthD domain; it reads HYFGTALHAK…RNIAADPEFA (77 aa).

This sequence belongs to the tpcK family.

Its function is as follows. Putative oxygenase; part of the gene cluster that mediates the biosynthesis of isoflavipucine. The PKS part of the PKS-NRPS ATEG_00325 probably assembles a triketide from an acetyl starter and two malonyl-CoA extender units. The poly-beta-keto intermediate would then be fused to the leucine unit by the NRPS part. The resulting amide would be liberated from the PKS-NRPS through reductive release of the linear PKS-NRPS product from the enzyme complex. Further steps in isoflapucine synthesis include a cyclization step, an oxidation step, a hydrolysis step involving a trans-amidation, and an additional oxidation step, leading to flavipucine. Formation of isoflavipucine from flavipucine requires an unusual rearrangement. Alternative rearrangement reactions could build up rubrobramide, representing a branching of flavipucine biosynthesis. The enzymes involved in the post-PKS-NRPS steps have not been identified yet, but the putative oxygenases ATEG_003329 and ATEG_00330 encoded by the cluster could play a role. In Aspergillus terreus (strain NIH 2624 / FGSC A1156), this protein is Putative oxygenase ATEG_00330.